The following is a 98-amino-acid chain: Large ribosomal subunit protein uL23 (98 aa).

It belongs to the universal ribosomal protein uL23 family. As to quaternary structure, part of the 50S ribosomal subunit. Contacts protein L29, and trigger factor when it is bound to the ribosome.

One of the early assembly proteins it binds 23S rRNA. One of the proteins that surrounds the polypeptide exit tunnel on the outside of the ribosome. Forms the main docking site for trigger factor binding to the ribosome. In Rickettsia peacockii (strain Rustic), this protein is Large ribosomal subunit protein uL23.